Reading from the N-terminus, the 226-residue chain is MARLLQASCLLSLLLAGFVPQSRGQEKSKMDCHGGMSSTIYEYGALTIDGEEYIPFKQYAGKYVLFVNVASYUGLTGQYIELNALQEELAPFGLVILGFPCNQFGKQEPGENSEILPTLKYVRPGGGFVPNFQLFEKGDVNGEKEQKFYTFLKNSCPPTSELLGTSDRLFWEPMKVHDIRWNFEKFLVGPDGTPIMRWHHRTTVSNVKMDILSYMRRQAALGVKRK.

Residues 1–24 form the signal peptide; it reads MARLLQASCLLSLLLAGFVPQSRG. The active site involves Sec73. A non-standard amino acid (selenocysteine) is located at residue Sec73.

This sequence belongs to the glutathione peroxidase family. As to quaternary structure, homotetramer. Secreted in plasma.

It is found in the secreted. It carries out the reaction 2 glutathione + H2O2 = glutathione disulfide + 2 H2O. The catalysed reaction is tert-butyl hydroperoxide + 2 glutathione = tert-butanol + glutathione disulfide + H2O. Protects cells and enzymes from oxidative damage, by catalyzing the reduction of hydrogen peroxide, lipid peroxides and organic hydroperoxide, by glutathione. The sequence is that of Glutathione peroxidase 3 from Hylobates lar (Lar gibbon).